Here is a 425-residue protein sequence, read N- to C-terminus: MKTKVAAIYGKRDVRLRVFELPEITDNELLVSVISDSVCLSTWKAALLGSEHKRVPDDLENHPVITGHECAGVIVEVGKNLTGKYKKGQRFVLQPAMGLPSGYSAGYSYEYFGGNATYMIIPEIAINLGCVLPYHGSYFAAASLAEPMCCIIGAYHANYHTTQYVYEHRMGVKPGGNIALLACAGPMGIGAIDYAINGGIQPSRVVVVDIDDKRLAQVQKLLPVELAASKGIELVYVNTKGMSDPVQMLRALTGDAGFDDIFVYAAVPAVVEMADELLAEDGCLNFFAGPTDKNFKVPFNFYNVHYNSTHVVGTSGGSTDDMKEAIALSATGQLQPSFMVTHIGGLDAVPETVLNLPDIPGGKKLIYNGVTMPLTAIADFAEKGKTDPLFKELARLVEETHGIWNEQAEKYLLAQFGVDIGEAAQ.

To K.pneumoniae SorE.

This is an uncharacterized protein from Escherichia coli (strain K12).